A 305-amino-acid chain; its full sequence is MSAIDKHAVKQFLMSLQDSICQQLEQEDGKAVFVEDAWQREKGERLGGGGRTRVLRDGHIFEQGGVNFSHVEGNEMPASATAHRPELAGRRFEAMGVSLVIHPKNPYVPTSHANVRFFIAEKDGEDPIWWFGGGFDLTPFYPFDEDCQSWHDTAKQLCAPFGDEVYPEHKAWCDKYFFLPHRNETRGVGGLFFDDLNQWEFDKCFDYIKAVGEGYCQAYLPIVSRRKDIEFGEREREFQLYRRGRYVEFNLVYDRGTLFGLQSGGRTESILMSMPPLARWEYSYEPQTGSPEAELYERYLTPREW.

Position 98 (Ser98) interacts with substrate. Residues His102 and His112 each contribute to the a divalent metal cation site. Residue His112 is the Proton donor of the active site. 114 to 116 provides a ligand contact to substrate; that stretch reads NVR. The a divalent metal cation site is built by His151 and His181. The segment at 246-281 is important for dimerization; that stretch reads YVEFNLVYDRGTLFGLQSGGRTESILMSMPPLARWE. 264-266 serves as a coordination point for substrate; it reads GGR.

Belongs to the aerobic coproporphyrinogen-III oxidase family. Homodimer. A divalent metal cation is required as a cofactor.

The protein localises to the cytoplasm. It carries out the reaction coproporphyrinogen III + O2 + 2 H(+) = protoporphyrinogen IX + 2 CO2 + 2 H2O. Its pathway is porphyrin-containing compound metabolism; protoporphyrin-IX biosynthesis; protoporphyrinogen-IX from coproporphyrinogen-III (O2 route): step 1/1. Functionally, involved in the heme biosynthesis. Catalyzes the aerobic oxidative decarboxylation of propionate groups of rings A and B of coproporphyrinogen-III to yield the vinyl groups in protoporphyrinogen-IX. This is Oxygen-dependent coproporphyrinogen-III oxidase from Vibrio campbellii (strain ATCC BAA-1116).